A 307-amino-acid polypeptide reads, in one-letter code: Murein tetrapeptide carboxypeptidase (307 aa).

Catalysis depends on S115, which acts as the Nucleophile. Active-site charge relay system residues include E217 and H285.

The protein belongs to the peptidase S66 family. In terms of assembly, homodimer.

The protein resides in the cytoplasm. It carries out the reaction N-acetyl-D-glucosaminyl-N-acetylmuramoyl-L-alanyl-meso-2,6-diaminoheptanedioyl-D-alanine + H2O = N-acetyl-D-glucosaminyl-N-acetylmuramoyl-L-alanyl-meso-2,6-diaminoheptanedioate + D-alanine. The protein operates within cell wall biogenesis; peptidoglycan recycling. Releases the terminal D-alanine residue from the cytoplasmic disaccharide-tetrapeptide GlcNAc-MurNAc-L-Ala-gamma-D-Glu-meso-Dap-D-Ala, which is a murein turnover product. Probably also act on free tetrapetide. May be involved in murein recycling. In Pseudomonas aeruginosa (strain ATCC 15692 / DSM 22644 / CIP 104116 / JCM 14847 / LMG 12228 / 1C / PRS 101 / PAO1), this protein is Murein tetrapeptide carboxypeptidase.